We begin with the raw amino-acid sequence, 274 residues long: Leucine-rich repeat-containing protein 10 (274 aa).

8 LRR repeats span residues 30 to 51 (LDRM…VCSF), 52 to 74 (TELV…LAQL), 76 to 97 (NLQI…VCTL), 98 to 120 (KQLC…LSLL), 121 to 143 (QNLR…VCEL), 145 to 166 (LLKT…LRRL), 167 to 189 (RELR…LLRM), and 191 to 213 (FLEV…HLTN). The interval 236–274 (RVGRWAEETPEPDPRKARRYALAKEENQEPPPPLLPSSS) is disordered. The segment covering 239–250 (RWAEETPEPDPR) has biased composition (basic and acidic residues). Residues 264-274 (EPPPPLLPSSS) show a composition bias toward pro residues.

As to expression, detected specifically in the heart.

The protein localises to the nucleus. In terms of biological role, may play important roles in cardiac development and/or cardiac function. The protein is Leucine-rich repeat-containing protein 10 (Lrrc10) of Mus musculus (Mouse).